We begin with the raw amino-acid sequence, 939 residues long: Valine--tRNA ligase (939 aa).

A 'HIGH' region motif is present at residues 47 to 57; it reads PNVTGILHMGH. Residues 563-567 carry the 'KMSKS' region motif; sequence KLSKS. Lys566 contacts ATP. A coiled-coil region spans residues 874–939; that stretch reads EHLAKERVRL…QSILDKLASL (66 aa).

Belongs to the class-I aminoacyl-tRNA synthetase family. ValS type 1 subfamily. In terms of assembly, monomer.

It is found in the cytoplasm. It carries out the reaction tRNA(Val) + L-valine + ATP = L-valyl-tRNA(Val) + AMP + diphosphate. Catalyzes the attachment of valine to tRNA(Val). As ValRS can inadvertently accommodate and process structurally similar amino acids such as threonine, to avoid such errors, it has a 'posttransfer' editing activity that hydrolyzes mischarged Thr-tRNA(Val) in a tRNA-dependent manner. This Chlamydia trachomatis serovar L2b (strain UCH-1/proctitis) protein is Valine--tRNA ligase.